We begin with the raw amino-acid sequence, 263 residues long: Ribonuclease HII (263 aa).

The RNase H type-2 domain occupies 39-257; the sequence is AFFTGIDEAG…VKPAAAPHAA (219 aa). A divalent metal cation is bound by residues Asp45, Glu46, and Asp157.

This sequence belongs to the RNase HII family. Requires Mn(2+) as cofactor. Mg(2+) serves as cofactor.

It localises to the cytoplasm. It carries out the reaction Endonucleolytic cleavage to 5'-phosphomonoester.. Functionally, endonuclease that specifically degrades the RNA of RNA-DNA hybrids. The chain is Ribonuclease HII from Oleidesulfovibrio alaskensis (strain ATCC BAA-1058 / DSM 17464 / G20) (Desulfovibrio alaskensis).